A 447-amino-acid chain; its full sequence is Na(+)-translocating NADH-quinone reductase subunit A (447 aa).

Belongs to the NqrA family. In terms of assembly, composed of six subunits; NqrA, NqrB, NqrC, NqrD, NqrE and NqrF.

The catalysed reaction is a ubiquinone + n Na(+)(in) + NADH + H(+) = a ubiquinol + n Na(+)(out) + NAD(+). In terms of biological role, NQR complex catalyzes the reduction of ubiquinone-1 to ubiquinol by two successive reactions, coupled with the transport of Na(+) ions from the cytoplasm to the periplasm. NqrA to NqrE are probably involved in the second step, the conversion of ubisemiquinone to ubiquinol. The sequence is that of Na(+)-translocating NADH-quinone reductase subunit A from Haemophilus influenzae (strain PittGG).